Reading from the N-terminus, the 523-residue chain is Glycerate kinase (523 aa).

A Phosphoserine modification is found at S60.

This sequence belongs to the glycerate kinase type-2 family. As to expression, widely expressed.

The protein resides in the cytoplasm. The protein localises to the mitochondrion. It catalyses the reaction (R)-glycerate + ATP = (2R)-3-phosphoglycerate + ADP + H(+). The chain is Glycerate kinase (GLYCTK) from Homo sapiens (Human).